The primary structure comprises 44 residues: Photosystem I reaction center subunit IX (44 aa).

A helical transmembrane segment spans residues 7 to 27 (YLSVAPVVSTIWFGALAGLLI).

This sequence belongs to the PsaJ family.

The protein resides in the plastid. The protein localises to the chloroplast thylakoid membrane. In terms of biological role, may help in the organization of the PsaE and PsaF subunits. This chain is Photosystem I reaction center subunit IX, found in Cucumis sativus (Cucumber).